The chain runs to 360 residues: Uptake hydrogenase small subunit (360 aa).

The tat-type signal signal peptide spans methionine 1–leucine 46. Residues cysteine 62, cysteine 65, cysteine 160, cysteine 194, histidine 232, cysteine 235, cysteine 260, and cysteine 266 each coordinate [4Fe-4S] cluster. Positions 275, 294, and 297 each coordinate [3Fe-4S] cluster.

It belongs to the [NiFe]/[NiFeSe] hydrogenase small subunit family. As to quaternary structure, heterodimer of a large and a small subunit. [4Fe-4S] cluster is required as a cofactor. It depends on [3Fe-4S] cluster as a cofactor. Predicted to be exported by the Tat system. The position of the signal peptide cleavage has not been experimentally proven.

The protein localises to the cell membrane. It catalyses the reaction H2 + A = AH2. Functionally, this enzyme recycles the H(2) produced by nitrogenase to increase the production of ATP and to protect nitrogenase against inhibition or damage by O(2) under carbon- or phosphate-limited conditions. The chain is Uptake hydrogenase small subunit (hupA) from Rhizobium leguminosarum bv. viciae.